Reading from the N-terminus, the 373-residue chain is P2Y purinoceptor 1 (373 aa).

The Extracellular segment spans residues 1–51; the sequence is MTEVLWPAAPNGTDAAFLASPGFHWGNSTATSTAAAAAPFRCALTKTGFQF. N-linked (GlcNAc...) asparagine glycans are attached at residues Asn-11 and Asn-27. Intrachain disulfides connect Cys-42–Cys-296 and Cys-124–Cys-202. Position 46 (Lys-46) interacts with ADP. The chain crosses the membrane as a helical span at residues 52–74; it reads YYLPAVYIVVFIIGFLGNSIAIW. The Cytoplasmic segment spans residues 75 to 87; the sequence is MFVFHMKPWSGIS. A helical transmembrane segment spans residues 88-109; it reads VYMFNLALADFLYVLTLPALIF. The Extracellular portion of the chain corresponds to 110–125; that stretch reads YYFNKTNWIFGDAMCK. N-linked (GlcNAc...) asparagine glycosylation occurs at Asn-113. Residues 126 to 147 traverse the membrane as a helical segment; it reads LQRFIFHVNLYGSILFLTCISA. Residues 148 to 166 lie on the Cytoplasmic side of the membrane; it reads HRYSGVVYPLKSLGRLKKK. The helical transmembrane segment at 167-188 threads the bilayer; the sequence is NAVYISVLVWLIVVVAISPILF. Residues 189 to 214 are Extracellular-facing; it reads YSGTGIRKNKTITCYDTTSDEYLRSY. Asn-197 carries an N-linked (GlcNAc...) asparagine glycan. ADP is bound at residue 203 to 205; it reads YDT. Residues 215–237 traverse the membrane as a helical segment; sequence FIYSMCTTVAMFCVPLVLILGCY. Residues 238–260 are Cytoplasmic-facing; that stretch reads GLIVRALIYKDLDNSPLRRKSIY. A helical membrane pass occupies residues 261-284; sequence LVIIVLTVFAVSYIPFHVMKTMNL. Residues 283–287, 303–306, and Arg-310 each bind ADP; these read NLRAR and YATY. The Extracellular portion of the chain corresponds to 285 to 303; the sequence is RARLDFQTPEMCTFNDRVY. Residues 304–325 form a helical membrane-spanning segment; the sequence is ATYQVTRGLASLNSCVDPILYF. Residues 326-373 are Cytoplasmic-facing; that stretch reads LAGDTFRRRLSRATRKASRRSEANLQSKSEDMTLNILSEFKQNGDTSL.

Belongs to the G-protein coupled receptor 1 family.

It localises to the cell membrane. Its function is as follows. Receptor for extracellular adenine nucleotides such as ADP. In platelets, binding to ADP leads to mobilization of intracellular calcium ions via activation of phospholipase C, a change in platelet shape, and ultimately platelet aggregation. This chain is P2Y purinoceptor 1 (P2RY1), found in Cavia porcellus (Guinea pig).